We begin with the raw amino-acid sequence, 253 residues long: Ribosome-inactivating protein saporin-5 (253 aa).

The active site involves Glu-176.

This sequence belongs to the ribosome-inactivating protein family. Type 1 RIP subfamily.

The catalysed reaction is Endohydrolysis of the N-glycosidic bond at one specific adenosine on the 28S rRNA.. Ribosome-inactivating protein of type 1, inhibits protein synthesis in animal cells. The protein is Ribosome-inactivating protein saporin-5 (SAP5) of Saponaria officinalis (Common soapwort).